The chain runs to 138 residues: Large ribosomal subunit protein uL16 (138 aa).

Basic residues predominate over residues 1 to 13 (MLQPARRKYRKEQ). Residues 1 to 22 (MLQPARRKYRKEQKGRNTGVAT) form a disordered region.

The protein belongs to the universal ribosomal protein uL16 family. In terms of assembly, part of the 50S ribosomal subunit.

Functionally, binds 23S rRNA and is also seen to make contacts with the A and possibly P site tRNAs. The protein is Large ribosomal subunit protein uL16 of Polaromonas sp. (strain JS666 / ATCC BAA-500).